The following is a 351-amino-acid chain: Beta-hexosaminidase (351 aa).

Substrate is bound by residues Asp62, Arg70, Arg134, and 164 to 165 (KH). Catalysis depends on His177, which acts as the Proton donor/acceptor. The active-site Nucleophile is the Asp249.

It belongs to the glycosyl hydrolase 3 family. NagZ subfamily. In terms of assembly, monomer.

The protein resides in the cytoplasm. The enzyme catalyses Hydrolysis of terminal non-reducing N-acetyl-D-hexosamine residues in N-acetyl-beta-D-hexosaminides.. It functions in the pathway cell wall biogenesis; peptidoglycan recycling. Functionally, plays a role in peptidoglycan recycling by cleaving the terminal beta-1,4-linked N-acetylglucosamine (GlcNAc) from peptide-linked peptidoglycan fragments, giving rise to free GlcNAc, anhydro-N-acetylmuramic acid and anhydro-N-acetylmuramic acid-linked peptides. The sequence is that of Beta-hexosaminidase from Pasteurella multocida (strain Pm70).